We begin with the raw amino-acid sequence, 563 residues long: Probable CoA ligase CCL11 (563 aa).

Residues 195–203, 328–333, aspartate 426, 438–441, and lysine 534 contribute to the ATP site; these read TSGTTSSPK, HGYGMT, and IKDR. Residues 263–328 are SBD1; it reads DGEIIFNLIR…TESLGFVISH (66 aa). An SBD2 region spans residues 329-405; the sequence is GYGMTEMLGV…LKGSSIMLGY (77 aa).

Belongs to the ATP-dependent AMP-binding enzyme family.

The protein localises to the cytoplasm. Its subcellular location is the cytosol. The polypeptide is Probable CoA ligase CCL11 (Humulus lupulus (European hop)).